A 134-amino-acid chain; its full sequence is uncharacterized protein (134 aa).

This is an uncharacterized protein from Swinepox virus (strain Kasza) (SWPV).